A 446-amino-acid polypeptide reads, in one-letter code: Maltoporin (446 aa).

The first 25 residues, 1–25 (MMITLRKLPLAVAVAAGVMSAQAMA), serve as a signal peptide directing secretion.

It belongs to the porin LamB (TC 1.B.3) family. As to quaternary structure, homotrimer formed of three 18-stranded antiparallel beta-barrels, containing three independent channels.

It is found in the cell outer membrane. It carries out the reaction beta-maltose(in) = beta-maltose(out). Functionally, involved in the transport of maltose and maltodextrins. The polypeptide is Maltoporin (Escherichia coli O157:H7 (strain EC4115 / EHEC)).